We begin with the raw amino-acid sequence, 182 residues long: NADH-quinone oxidoreductase subunit I (182 aa).

4Fe-4S ferredoxin-type domains follow at residues 52–82 (LTRD…LQKA) and 92–121 (DFFR…LTPD). The [4Fe-4S] cluster site is built by Cys62, Cys65, Cys68, Cys72, Cys101, Cys104, Cys107, and Cys111.

This sequence belongs to the complex I 23 kDa subunit family. In terms of assembly, NDH-1 is composed of 13 different subunits. Subunits NuoA, H, J, K, L, M, N constitute the membrane sector of the complex. Requires [4Fe-4S] cluster as cofactor.

The protein localises to the cell inner membrane. It carries out the reaction a quinone + NADH + 5 H(+)(in) = a quinol + NAD(+) + 4 H(+)(out). Its function is as follows. NDH-1 shuttles electrons from NADH, via FMN and iron-sulfur (Fe-S) centers, to quinones in the respiratory chain. The immediate electron acceptor for the enzyme in this species is believed to be ubiquinone. Couples the redox reaction to proton translocation (for every two electrons transferred, four hydrogen ions are translocated across the cytoplasmic membrane), and thus conserves the redox energy in a proton gradient. This is NADH-quinone oxidoreductase subunit I from Pseudomonas syringae pv. tomato (strain ATCC BAA-871 / DC3000).